A 427-amino-acid chain; its full sequence is UDP-N-acetylglucosamine--N-acetylmuramyl-(pentapeptide) pyrophosphoryl-undecaprenol N-acetylglucosamine transferase (427 aa).

UDP-N-acetyl-alpha-D-glucosamine is bound by residues 29–31, Asn141, Arg177, Ser205, Ile258, and Gln303; that span reads TGG. Residues 408–427 are disordered; the sequence is SLHPIPDSRFPIRTSAGGAQ.

The protein belongs to the glycosyltransferase 28 family. MurG subfamily.

It localises to the cell inner membrane. The catalysed reaction is di-trans,octa-cis-undecaprenyl diphospho-N-acetyl-alpha-D-muramoyl-L-alanyl-D-glutamyl-meso-2,6-diaminopimeloyl-D-alanyl-D-alanine + UDP-N-acetyl-alpha-D-glucosamine = di-trans,octa-cis-undecaprenyl diphospho-[N-acetyl-alpha-D-glucosaminyl-(1-&gt;4)]-N-acetyl-alpha-D-muramoyl-L-alanyl-D-glutamyl-meso-2,6-diaminopimeloyl-D-alanyl-D-alanine + UDP + H(+). Its pathway is cell wall biogenesis; peptidoglycan biosynthesis. Functionally, cell wall formation. Catalyzes the transfer of a GlcNAc subunit on undecaprenyl-pyrophosphoryl-MurNAc-pentapeptide (lipid intermediate I) to form undecaprenyl-pyrophosphoryl-MurNAc-(pentapeptide)GlcNAc (lipid intermediate II). In Xanthomonas campestris pv. campestris (strain 8004), this protein is UDP-N-acetylglucosamine--N-acetylmuramyl-(pentapeptide) pyrophosphoryl-undecaprenol N-acetylglucosamine transferase.